The following is a 310-amino-acid chain: Ribosomal RNA small subunit methyltransferase H (310 aa).

S-adenosyl-L-methionine is bound by residues 32–34, D52, F79, D100, and Q107; that span reads AGH.

It belongs to the methyltransferase superfamily. RsmH family.

The protein resides in the cytoplasm. The enzyme catalyses cytidine(1402) in 16S rRNA + S-adenosyl-L-methionine = N(4)-methylcytidine(1402) in 16S rRNA + S-adenosyl-L-homocysteine + H(+). Functionally, specifically methylates the N4 position of cytidine in position 1402 (C1402) of 16S rRNA. The polypeptide is Ribosomal RNA small subunit methyltransferase H (Halalkalibacterium halodurans (strain ATCC BAA-125 / DSM 18197 / FERM 7344 / JCM 9153 / C-125) (Bacillus halodurans)).